A 129-amino-acid chain; its full sequence is MRHGHGLRKLNRTSSHRLAMLQNMMNSLIEHEAIKTTLPKAKELRRVIEPMITLAKEDSVANRRLAFNRLRDRDSVTKLFNDLGPRFKTRPGGYTRILKMGFRVGDNAPMAYVELVDRAETPEVSSTEA.

It belongs to the bacterial ribosomal protein bL17 family. As to quaternary structure, part of the 50S ribosomal subunit. Contacts protein L32.

This chain is Large ribosomal subunit protein bL17, found in Acidovorax ebreus (strain TPSY) (Diaphorobacter sp. (strain TPSY)).